The following is a 133-amino-acid chain: Large ribosomal subunit protein uL15 (133 aa).

The disordered stretch occupies residues 1–62 (MALHNLQPAP…GQQPLQRRLP (62 aa)). Over residues 32 to 45 (TRGQKGQKSRTGYS) the composition is skewed to polar residues.

It belongs to the universal ribosomal protein uL15 family. As to quaternary structure, part of the 50S ribosomal subunit.

Functionally, binds to the 23S rRNA. The protein is Large ribosomal subunit protein uL15 of Nitratiruptor sp. (strain SB155-2).